The chain runs to 478 residues: Sulfate adenylyltransferase subunit 1 (478 aa).

The tr-type G domain occupies Lys24–Asp240. Residues Gly33–Ser40 form a G1 region. Residue Gly33–Ser40 coordinates GTP. The G2 stretch occupies residues Gly91 to Asp95. The interval Asp112–Gly115 is G3. Residues Asp112–His116 and Asn167–Asp170 each bind GTP. The segment at Asn167 to Asp170 is G4. The tract at residues Ser206 to Leu208 is G5.

The protein belongs to the TRAFAC class translation factor GTPase superfamily. Classic translation factor GTPase family. CysN/NodQ subfamily. As to quaternary structure, heterodimer composed of CysD, the smaller subunit, and CysN.

The enzyme catalyses sulfate + ATP + H(+) = adenosine 5'-phosphosulfate + diphosphate. The protein operates within sulfur metabolism; hydrogen sulfide biosynthesis; sulfite from sulfate: step 1/3. Its function is as follows. With CysD forms the ATP sulfurylase (ATPS) that catalyzes the adenylation of sulfate producing adenosine 5'-phosphosulfate (APS) and diphosphate, the first enzymatic step in sulfur assimilation pathway. APS synthesis involves the formation of a high-energy phosphoric-sulfuric acid anhydride bond driven by GTP hydrolysis by CysN coupled to ATP hydrolysis by CysD. This chain is Sulfate adenylyltransferase subunit 1, found in Aliivibrio fischeri (strain ATCC 700601 / ES114) (Vibrio fischeri).